Consider the following 171-residue polypeptide: MHQVISATTNPAKIQAILQAFEEIFGEGSCHITPIAVESGVPEQPFGSEETRTGARNRVANARLLCPEADFWVAIEAGIDDNSTFSWVVIESVELRGESRSATLPLPAVILENVRAGDALGPVMSRYTGIDEIGRKEGAIGIFTAGKLTRSSVYHQAVILALSPFHNAVYR.

8–13 (TTNPAK) lines the substrate pocket. Residues Glu-38 and Glu-68 each contribute to the Mg(2+) site. A substrate-binding site is contributed by 68 to 69 (EA).

This sequence belongs to the YjjX NTPase family. Homodimer. Mg(2+) serves as cofactor. Requires Mn(2+) as cofactor.

It catalyses the reaction XTP + H2O = XDP + phosphate + H(+). It carries out the reaction ITP + H2O = IDP + phosphate + H(+). Phosphatase that hydrolyzes non-canonical purine nucleotides such as XTP and ITP to their respective diphosphate derivatives. Probably excludes non-canonical purines from DNA/RNA precursor pool, thus preventing their incorporation into DNA/RNA and avoiding chromosomal lesions. This Salmonella arizonae (strain ATCC BAA-731 / CDC346-86 / RSK2980) protein is Inosine/xanthosine triphosphatase (yjjX).